The primary structure comprises 261 residues: Polycomb group RING finger protein 1 (261 aa).

The segment at 45–84 adopts an RING-type zinc-finger fold; the sequence is CYLCAGYFIDATTITECLHTFCKSCIVKYLQTSKYCPMCN.

As to quaternary structure, component of a PRC1-like complex.

It is found in the nucleus. Its function is as follows. Component of a Polycomb group (PcG) multiprotein PRC1-like complex, a complex class required to maintain the transcriptionally repressive state of many genes, including Hox genes, throughout development. PcG PRC1 complex acts via chromatin remodeling and modification of histones; it mediates monoubiquitination of histone H2A 'Lys-119', rendering chromatin heritably changed in its expressibility. This Danio rerio (Zebrafish) protein is Polycomb group RING finger protein 1 (pcgf1).